The chain runs to 959 residues: MSDIIIDLSRDSKFDELGLKRLRESYMMREETSPQERFAYVCKQVGTDRDHSQRLYEYTSKHWLSLSTPILSFGKANHGLPISCYLSWIEDTKEGLIDTLSEVNQLSMLGGGVGVGVGIRTSDNKSTGVMSHLNTYDACSLAYKQDGVRRGSYAMYLNNNHPDVLQFIEMRKPTGDHNIRCLNLHHGLNISDEFMELIEKCDGGGNIDDTWNLIDPHTKKITTVGARDLWQRILETRMKTGEPYICFIDTCNKHMYDFQKKKGLTIKQSNLCVAPETMILTEDGQFPIKDLEGKIIKVWNGNEFSSVTVVKTGTEKELLEVELSNGCTLSCTPEHKFIIVKSYTEAKKQKTDDNAIANAERVDAQDLKPRMKLIKFDLPTLFGNSEHDIKYPYTHGFFCGDGTYTKYGKPQLSLYGDKKELLTYLDVRTMTGLEDASGRLNTWLPLDLAPKFDVPINSSLECRMEWLAGYLDADGCVFRNGTNESIQVSCIHLDFLKRIQLLLIGMGVTSKITKLHDEKITTMPDGKGGQKPYSCKPIWRLFISSSGLYHLSEQGFETRRLKWEPRQPQRNAERFVEVLKVNKTGRVDDTYCFTEPINHAGVFNGILTGQCSEIILPTDSTRTAVCCLSSLNLEYYDEWKDNDLFIKDVMEMLDNALTIFIEKAPPTISRAVNSAKKERSIGIGVLGFHSFLQQKNISFESDEAAKLNIDIFTKLRSKIDTFNLVLGSLRGSPEDAEGTGRRFCCTMAVAPTATSSIIMGNTSPSVEPFRANAYRQDTLSGSFLNKNRYLSRILSQRLNVKEINEVWSNIVSNGGSVQQLPNNLLSEQEKQVFKTAFEINQKWVIKHAADRQKYIDQSQSINLFLKPDIHKRELHSLHLNAWKSGLKTLYYLRSEKIADADKISSNHMINSINFTNIKESIKDSIKVSILEVRNKEKNYEEKICKLTNGRRLSGCFACE.

Substrate contacts are provided by residues Thr68, 83–84 (SC), and Gly112. A disulfide bond links Cys84 and Cys626. Residue Asn270 is the Proton acceptor of the active site. One can recognise a DOD-type homing endonuclease domain in the interval 378–508 (LPTLFGNSEH…IQLLLIGMGV (131 aa)). Residue Cys611 is the Cysteine radical intermediate of the active site. Catalysis depends on Glu613, which acts as the Proton acceptor. Residue 751–755 (PTATS) participates in substrate binding.

This sequence belongs to the ribonucleoside diphosphate reductase large chain family. In terms of assembly, heterotetramer composed of a homodimer of the large subunit (R1) and a homodimer of the small subunit (R2). Larger multisubunit protein complex are also active, composed of (R1)n(R2)n.

The catalysed reaction is a 2'-deoxyribonucleoside 5'-diphosphate + [thioredoxin]-disulfide + H2O = a ribonucleoside 5'-diphosphate + [thioredoxin]-dithiol. Under complex allosteric control mediated by deoxynucleoside triphosphates and ATP binding. The type of nucleotide bound at the specificity site determines substrate preference. It seems probable that ATP makes the enzyme reduce CDP and UDP, dGTP favors ADP reduction and dTTP favors GDP reduction. Functionally, ribonucleoside-diphosphate reductase holoenzyme provides the precursors necessary for viral DNA synthesis. Allows virus growth in non-dividing cells. Catalyzes the biosynthesis of deoxyribonucleotides from the corresponding ribonucleotides. This chain is Ribonucleoside-diphosphate reductase large subunit, found in Acheta domesticus (House cricket).